The following is a 175-amino-acid chain: Bifunctional protein PyrR (175 aa).

Residues 98 to 110 (VIIIDDVLYTGRT) carry the PRPP-binding motif.

The protein belongs to the purine/pyrimidine phosphoribosyltransferase family. PyrR subfamily. Homodimer and homohexamer; in equilibrium.

The enzyme catalyses UMP + diphosphate = 5-phospho-alpha-D-ribose 1-diphosphate + uracil. In terms of biological role, regulates transcriptional attenuation of the pyrimidine nucleotide (pyr) operon by binding in a uridine-dependent manner to specific sites on pyr mRNA. This disrupts an antiterminator hairpin in the RNA and favors formation of a downstream transcription terminator, leading to a reduced expression of downstream genes. Also displays a weak uracil phosphoribosyltransferase activity which is not physiologically significant. In Staphylococcus carnosus (strain TM300), this protein is Bifunctional protein PyrR.